The sequence spans 312 residues: DNA-directed RNA polymerase subunit alpha (312 aa).

Residues 1–229 are alpha N-terminal domain (alpha-NTD); that stretch reads MLQYQIDRID…ELFQPLATVT (229 aa). The interval 241–312 is alpha C-terminal domain (alpha-CTD); it reads SPEAQIPLEE…ISIPQSRTSV (72 aa).

The protein belongs to the RNA polymerase alpha chain family. In cyanobacteria the RNAP catalytic core is composed of 2 alpha, 1 beta, 1 beta', 1 gamma and 1 omega subunit. When a sigma factor is associated with the core the holoenzyme is formed, which can initiate transcription.

The enzyme catalyses RNA(n) + a ribonucleoside 5'-triphosphate = RNA(n+1) + diphosphate. In terms of biological role, DNA-dependent RNA polymerase catalyzes the transcription of DNA into RNA using the four ribonucleoside triphosphates as substrates. The polypeptide is DNA-directed RNA polymerase subunit alpha (Prochlorococcus marinus (strain MIT 9215)).